The sequence spans 529 residues: UDP-glucuronosyltransferase 2B1 (529 aa).

A signal peptide spans 1 to 23; that stretch reads MSMKQTSVFLLIQLICYFRPGAC. Residues Asn-134 and Asn-316 are each glycosylated (N-linked (GlcNAc...) asparagine). The chain crosses the membrane as a helical span at residues 494 to 510; the sequence is VIGFLLLCVVGVVFIIT.

Belongs to the UDP-glycosyltransferase family.

It localises to the endoplasmic reticulum membrane. It carries out the reaction glucuronate acceptor + UDP-alpha-D-glucuronate = acceptor beta-D-glucuronoside + UDP + H(+). The enzyme catalyses 17beta-estradiol + UDP-alpha-D-glucuronate = 17beta-estradiol 17-O-(beta-D-glucuronate) + UDP + H(+). UDP-glucuronosyltransferase (UGT) that catalyzes phase II biotransformation reactions in which lipophilic substrates are conjugated with glucuronic acid to increase the metabolite's water solubility, thereby facilitating excretion into either the urine or bile. Essential for the elimination and detoxification of drugs, xenobiotics and endogenous compounds. Catalyzes the glucuronidation of the endogenous estrogen hormone estradiol. The protein is UDP-glucuronosyltransferase 2B1 of Rattus norvegicus (Rat).